Consider the following 122-residue polypeptide: UPF0382 membrane protein SH2409 (122 aa).

4 helical membrane passes run 3–23, 46–66, 69–89, and 98–118; these read LFII…AFGA, MYHG…SINV, AGWL…ILAL, and ITPI…ISTF.

This sequence belongs to the UPF0382 family.

It is found in the cell membrane. The chain is UPF0382 membrane protein SH2409 from Staphylococcus haemolyticus (strain JCSC1435).